We begin with the raw amino-acid sequence, 95 residues long: Large ribosomal subunit protein uL23 (95 aa).

The protein belongs to the universal ribosomal protein uL23 family. As to quaternary structure, part of the 50S ribosomal subunit. Contacts protein L29, and trigger factor when it is bound to the ribosome.

One of the early assembly proteins it binds 23S rRNA. One of the proteins that surrounds the polypeptide exit tunnel on the outside of the ribosome. Forms the main docking site for trigger factor binding to the ribosome. The protein is Large ribosomal subunit protein uL23 of Desulfitobacterium hafniense (strain Y51).